The primary structure comprises 131 residues: Aspartate 1-decarboxylase (131 aa).

Serine 25 serves as the catalytic Schiff-base intermediate with substrate; via pyruvic acid. Serine 25 bears the Pyruvic acid (Ser) mark. Residue threonine 57 coordinates substrate. Catalysis depends on tyrosine 58, which acts as the Proton donor. A substrate-binding site is contributed by 73-75 (GAA). A disordered region spans residues 112–131 (NVPTTQKSENPGQGSLRNAI). Polar residues predominate over residues 113–131 (VPTTQKSENPGQGSLRNAI).

Belongs to the PanD family. As to quaternary structure, heterooctamer of four alpha and four beta subunits. It depends on pyruvate as a cofactor. Is synthesized initially as an inactive proenzyme, which is activated by self-cleavage at a specific serine bond to produce a beta-subunit with a hydroxyl group at its C-terminus and an alpha-subunit with a pyruvoyl group at its N-terminus.

It localises to the cytoplasm. The enzyme catalyses L-aspartate + H(+) = beta-alanine + CO2. Its pathway is cofactor biosynthesis; (R)-pantothenate biosynthesis; beta-alanine from L-aspartate: step 1/1. In terms of biological role, catalyzes the pyruvoyl-dependent decarboxylation of aspartate to produce beta-alanine. This is Aspartate 1-decarboxylase from Syntrophotalea carbinolica (strain DSM 2380 / NBRC 103641 / GraBd1) (Pelobacter carbinolicus).